The sequence spans 458 residues: UDP-N-acetylmuramate--L-alanine ligase (458 aa).

118–124 (GTHGKTT) provides a ligand contact to ATP.

Belongs to the MurCDEF family.

The protein resides in the cytoplasm. The enzyme catalyses UDP-N-acetyl-alpha-D-muramate + L-alanine + ATP = UDP-N-acetyl-alpha-D-muramoyl-L-alanine + ADP + phosphate + H(+). It participates in cell wall biogenesis; peptidoglycan biosynthesis. Its function is as follows. Cell wall formation. This chain is UDP-N-acetylmuramate--L-alanine ligase, found in Clostridium botulinum (strain Okra / Type B1).